Here is a 484-residue protein sequence, read N- to C-terminus: tRNA sulfurtransferase (484 aa).

One can recognise a THUMP domain in the interval 63 to 167 (EAFAERLACI…KESLYLVSKR (105 aa)). Residues 185 to 186 (LI), K267, G289, and Q298 each bind ATP. An intrachain disulfide couples C346 to C458. One can recognise a Rhodanese domain in the interval 406-484 (INSGEVIIDV…GYDNVKVYRP (79 aa)). The active-site Cysteine persulfide intermediate is C458.

The protein belongs to the ThiI family.

It localises to the cytoplasm. It carries out the reaction [ThiI sulfur-carrier protein]-S-sulfanyl-L-cysteine + a uridine in tRNA + 2 reduced [2Fe-2S]-[ferredoxin] + ATP + H(+) = [ThiI sulfur-carrier protein]-L-cysteine + a 4-thiouridine in tRNA + 2 oxidized [2Fe-2S]-[ferredoxin] + AMP + diphosphate. It catalyses the reaction [ThiS sulfur-carrier protein]-C-terminal Gly-Gly-AMP + S-sulfanyl-L-cysteinyl-[cysteine desulfurase] + AH2 = [ThiS sulfur-carrier protein]-C-terminal-Gly-aminoethanethioate + L-cysteinyl-[cysteine desulfurase] + A + AMP + 2 H(+). It participates in cofactor biosynthesis; thiamine diphosphate biosynthesis. In terms of biological role, catalyzes the ATP-dependent transfer of a sulfur to tRNA to produce 4-thiouridine in position 8 of tRNAs, which functions as a near-UV photosensor. Also catalyzes the transfer of sulfur to the sulfur carrier protein ThiS, forming ThiS-thiocarboxylate. This is a step in the synthesis of thiazole, in the thiamine biosynthesis pathway. The sulfur is donated as persulfide by IscS. This chain is tRNA sulfurtransferase, found in Shewanella woodyi (strain ATCC 51908 / MS32).